The following is an 82-amino-acid chain: UPF0235 protein Pden_2174 (82 aa).

Belongs to the UPF0235 family.

This chain is UPF0235 protein Pden_2174, found in Paracoccus denitrificans (strain Pd 1222).